Consider the following 267-residue polypeptide: Ribosomal RNA large subunit methyltransferase E (267 aa).

Positions 52, 54, 72, 90, and 114 each coordinate S-adenosyl-L-methionine. Residue lysine 154 is the Proton acceptor of the active site. Low complexity predominate over residues 212 to 252 (EAPRAPAPPEQAAAPEEATAPATRAARQKPAPAKKPAAAKR). The interval 212 to 267 (EAPRAPAPPEQAAAPEEATAPATRAARQKPAPAKKPAAAKRPAARKRAAKKPARRA) is disordered. A compositionally biased stretch (basic residues) spans 253 to 267 (PAARKRAAKKPARRA).

The protein belongs to the class I-like SAM-binding methyltransferase superfamily. RNA methyltransferase RlmE family.

The protein resides in the cytoplasm. It catalyses the reaction uridine(2552) in 23S rRNA + S-adenosyl-L-methionine = 2'-O-methyluridine(2552) in 23S rRNA + S-adenosyl-L-homocysteine + H(+). In terms of biological role, specifically methylates the uridine in position 2552 of 23S rRNA at the 2'-O position of the ribose in the fully assembled 50S ribosomal subunit. This Anaeromyxobacter dehalogenans (strain 2CP-C) protein is Ribosomal RNA large subunit methyltransferase E.